Here is a 309-residue protein sequence, read N- to C-terminus: Aspartate carbamoyltransferase catalytic subunit (309 aa).

Residues Arg-49 and Thr-50 each coordinate carbamoyl phosphate. Lys-77 provides a ligand contact to L-aspartate. Carbamoyl phosphate is bound by residues Arg-99, His-127, and Gln-130. Arg-160 and Arg-211 together coordinate L-aspartate. The carbamoyl phosphate site is built by Ala-252 and Pro-253.

It belongs to the aspartate/ornithine carbamoyltransferase superfamily. ATCase family. Heterododecamer (2C3:3R2) of six catalytic PyrB chains organized as two trimers (C3), and six regulatory PyrI chains organized as three dimers (R2).

The enzyme catalyses carbamoyl phosphate + L-aspartate = N-carbamoyl-L-aspartate + phosphate + H(+). The protein operates within pyrimidine metabolism; UMP biosynthesis via de novo pathway; (S)-dihydroorotate from bicarbonate: step 2/3. Catalyzes the condensation of carbamoyl phosphate and aspartate to form carbamoyl aspartate and inorganic phosphate, the committed step in the de novo pyrimidine nucleotide biosynthesis pathway. This Geobacillus sp. (strain WCH70) protein is Aspartate carbamoyltransferase catalytic subunit.